We begin with the raw amino-acid sequence, 89 residues long: Small ribosomal subunit protein uS15 (89 aa).

The protein belongs to the universal ribosomal protein uS15 family. Part of the 30S ribosomal subunit. Forms a bridge to the 50S subunit in the 70S ribosome, contacting the 23S rRNA.

Functionally, one of the primary rRNA binding proteins, it binds directly to 16S rRNA where it helps nucleate assembly of the platform of the 30S subunit by binding and bridging several RNA helices of the 16S rRNA. In terms of biological role, forms an intersubunit bridge (bridge B4) with the 23S rRNA of the 50S subunit in the ribosome. The polypeptide is Small ribosomal subunit protein uS15 (Klebsiella pneumoniae subsp. pneumoniae (strain ATCC 700721 / MGH 78578)).